A 314-amino-acid polypeptide reads, in one-letter code: uncharacterized protein (314 aa).

The disordered stretch occupies residues methionine 1–threonine 70. Residues arginine 44 to lysine 65 are compositionally biased toward basic residues. S-adenosyl-L-methionine is bound by residues glycine 265, isoleucine 285, and leucine 294.

The protein belongs to the class IV-like SAM-binding methyltransferase superfamily. RNA methyltransferase TrmH family.

This is an uncharacterized protein from Mycolicibacterium gilvum (strain PYR-GCK) (Mycobacterium gilvum (strain PYR-GCK)).